The chain runs to 422 residues: Zinc finger and BTB domain-containing protein 42 (422 aa).

In terms of domain architecture, BTB spans 24–92; sequence CDCTVLVGDA…MYEGRLDLRS (69 aa). 3 disordered regions span residues 121–141, 166–188, and 207–256; these read KDRS…QPPC, AALP…DQAL, and LQTP…AAKG. The span at 243–252 shows a compositional bias: pro residues; that stretch reads HSPPKPPPVP. C2H2-type zinc fingers lie at residues 294–316, 334–356, 362–384, and 390–413; these read CICP…LSAH, PTCP…ERTH, YTCV…TVVH, and HACR…RKFH.

Belongs to the krueppel C2H2-type zinc-finger protein family. ZBTB18 subfamily. Expressed in skeletal muscle (at protein level).

The protein resides in the cytoplasm. Its subcellular location is the nucleus. It is found in the nucleoplasm. In terms of biological role, transcriptional repressor. Specifically binds DNA and probably acts by recruiting chromatin remodeling multiprotein complexes. This chain is Zinc finger and BTB domain-containing protein 42 (ZBTB42), found in Homo sapiens (Human).